The primary structure comprises 37 residues: Cytochrome b6-f complex subunit 5 (37 aa).

A helical transmembrane segment spans residues 5–25 (LLSGIVLGLVPVTIAGLFVTA).

The protein belongs to the PetG family. As to quaternary structure, the 4 large subunits of the cytochrome b6-f complex are cytochrome b6, subunit IV (17 kDa polypeptide, PetD), cytochrome f and the Rieske protein, while the 4 small subunits are PetG, PetL, PetM and PetN. The complex functions as a dimer.

It localises to the plastid. Its subcellular location is the chloroplast thylakoid membrane. Functionally, component of the cytochrome b6-f complex, which mediates electron transfer between photosystem II (PSII) and photosystem I (PSI), cyclic electron flow around PSI, and state transitions. PetG is required for either the stability or assembly of the cytochrome b6-f complex. This is Cytochrome b6-f complex subunit 5 from Stigeoclonium helveticum (Green alga).